We begin with the raw amino-acid sequence, 116 residues long: Large-conductance mechanosensitive channel (116 aa).

2 helical membrane passes run 7-27 (EFAL…GAAF) and 64-84 (GLFI…FIFV).

It belongs to the MscL family. Homopentamer.

Its subcellular location is the cell membrane. In terms of biological role, channel that opens in response to stretch forces in the membrane lipid bilayer. May participate in the regulation of osmotic pressure changes within the cell. This Staphylococcus epidermidis (strain ATCC 35984 / DSM 28319 / BCRC 17069 / CCUG 31568 / BM 3577 / RP62A) protein is Large-conductance mechanosensitive channel.